We begin with the raw amino-acid sequence, 343 residues long: NADH-ubiquinone oxidoreductase chain 2 (343 aa).

A run of 8 helical transmembrane segments spans residues 1–21 (MNPMSWLIITTSIALSTTMIT), 59–81 (YYLIQTMASTSMLFAATTNALNT), 96–116 (TIITLALMMKMAAAPFHSWLP), 150–170 (NITLILLSAMLSITMGGLGSL), 178–198 (LMAFSSIAHTGWIMATITMAP), 200–220 (ISTLTFTIYIMTTIPTFLLIN), 241–261 (MTILSMTILSMGGLPPLSGFM), and 270–290 (LISMNMITEATLMAMASLLSL).

The protein belongs to the complex I subunit 2 family.

The protein localises to the mitochondrion inner membrane. The enzyme catalyses a ubiquinone + NADH + 5 H(+)(in) = a ubiquinol + NAD(+) + 4 H(+)(out). Functionally, core subunit of the mitochondrial membrane respiratory chain NADH dehydrogenase (Complex I) that is believed to belong to the minimal assembly required for catalysis. Complex I functions in the transfer of electrons from NADH to the respiratory chain. The immediate electron acceptor for the enzyme is believed to be ubiquinone. This is NADH-ubiquinone oxidoreductase chain 2 (MT-ND2) from Lycodon semicarinatus (Ryukyu odd-tooth snake).